The primary structure comprises 359 residues: Insulin gene enhancer protein ISL-2 (359 aa).

LIM zinc-binding domains follow at residues 25–86 (AMCV…RLFG) and 87–149 (IKCA…LLER). Positions 151-190 (AAGSPRSPGPLPGARGLHLPDAGSGRQPSLRTHVHKQAEK) are disordered. Ser154 and Ser157 each carry phosphoserine. Residues 191 to 250 (TTRVRTVLNEKQLHTLRTCYAANPRPDALMKEQLVEMTGLSPRVIRVWFQNKRCKDKKKS) constitute a DNA-binding region (homeobox). The LIM-binding domain (LID) stretch occupies residues 272–301 (GTPLVAGSPIRHENAVQGSAVEVQTYQPPW). Ser279 carries the phosphoserine modification. Positions 326–336 (ESGSLGNSSGS) are enriched in low complexity. Residues 326 to 359 (ESGSLGNSSGSDVTSLSSQLPDTPNSMVPSPVET) are disordered. Polar residues predominate over residues 337 to 359 (DVTSLSSQLPDTPNSMVPSPVET).

As to quaternary structure, interacts with LHX4.

Its subcellular location is the nucleus. In terms of biological role, transcriptional factor that defines subclasses of motoneurons that segregate into columns in the spinal cord and select distinct axon pathways. This is Insulin gene enhancer protein ISL-2 (Isl2) from Mus musculus (Mouse).